Consider the following 219-residue polypeptide: MDQLEMKKMAAQAALQFVQPDSIVGVGSGSTVNCFIEALGAMRDQIKGAVAASKASEELLRKQGIEVFSANDVSSLDIYVDGADEINPQKMMIKGGGAALTREKIVASLTKNFICIVDSSKQVDVLGSTFPLPVEVIPMARSQVARKLVALGGSPEWRQGVVTDNGNVILDVHNFPIMNPPEMEKELNNVAGVVTNGIFALNAANTVIVGTPEGAKIIK.

Residues 28-31, 81-84, and 94-97 each bind substrate; these read SGST, DGAD, and KGGG. Glu-103 serves as the catalytic Proton acceptor. A substrate-binding site is contributed by Lys-121.

It belongs to the ribose 5-phosphate isomerase family. In terms of assembly, homodimer.

The enzyme catalyses aldehydo-D-ribose 5-phosphate = D-ribulose 5-phosphate. Its pathway is carbohydrate degradation; pentose phosphate pathway; D-ribose 5-phosphate from D-ribulose 5-phosphate (non-oxidative stage): step 1/1. Its function is as follows. Catalyzes the reversible conversion of ribose-5-phosphate to ribulose 5-phosphate. The sequence is that of Ribose-5-phosphate isomerase A from Actinobacillus succinogenes (strain ATCC 55618 / DSM 22257 / CCUG 43843 / 130Z).